The primary structure comprises 92 residues: DNA-directed RNA polymerase subunit omega (92 aa).

Belongs to the RNA polymerase subunit omega family. As to quaternary structure, the RNAP catalytic core consists of 2 alpha, 1 beta, 1 beta' and 1 omega subunit. When a sigma factor is associated with the core the holoenzyme is formed, which can initiate transcription.

It carries out the reaction RNA(n) + a ribonucleoside 5'-triphosphate = RNA(n+1) + diphosphate. In terms of biological role, promotes RNA polymerase assembly. Latches the N- and C-terminal regions of the beta' subunit thereby facilitating its interaction with the beta and alpha subunits. The polypeptide is DNA-directed RNA polymerase subunit omega (Shewanella baltica (strain OS223)).